A 346-amino-acid polypeptide reads, in one-letter code: Protein STAR1 (346 aa).

The tract at residues 23-48 (QRPPPNGTVHACSKSRPPQLEPGKVG) is disordered. Positions 112 to 344 (IRVRGLTRRS…KHPMARRFLE (233 aa)) constitute an ABC transporter domain. 146–153 (GPSGSGKS) contributes to the ATP binding site.

This sequence belongs to the ABC transporter superfamily. ABCI family. As to quaternary structure, interacts with STAR2. As to expression, expressed in roots.

Its subcellular location is the membrane. Associates with STAR2 to form a functional transmembrane ABC transporter required for detoxification of aluminum (Al) in roots. Can specifically transport UDP-glucose. In Oryza sativa subsp. japonica (Rice), this protein is Protein STAR1.